A 249-amino-acid chain; its full sequence is (2S)-[(R)-hydroxy(phenyl)methyl]succinyl-CoA dehydrogenase subunit BbsC (249 aa).

This sequence belongs to the short-chain dehydrogenases/reductases (SDR) family. In terms of assembly, heterotetramer composed of 2 inactive BbsC subunits and 2 active BbsD subunits.

It participates in xenobiotic degradation; toluene degradation. Functionally, involved in an anaerobic toluene degradation pathway. Catalytically inactive subunit, which is probably required for the structural and/or regulatory integrity of the catalytic subunit BbsD. This subunit cannot bind NAD(+) or substrate. The chain is (2S)-[(R)-hydroxy(phenyl)methyl]succinyl-CoA dehydrogenase subunit BbsC from Thauera aromatica.